We begin with the raw amino-acid sequence, 523 residues long: Fidgetin-like protein 1 (523 aa).

The interval 114 to 154 (PVQQAVKSRPEGQFPESRNNSTKKIDAQQYSSESSSQSGFG) is disordered. Residues 141–151 (QQYSSESSSQS) show a composition bias toward low complexity. ATP contacts are provided by residues Ala-253 and 293–298 (GTGKTL).

It belongs to the AAA ATPase family. Hexamer. Mg(2+) serves as cofactor.

The enzyme catalyses ATP + H2O = ADP + phosphate + H(+). The sequence is that of Fidgetin-like protein 1 from Drosophila melanogaster (Fruit fly).